Consider the following 763-residue polypeptide: Phosphoglycerol transferase I (763 aa).

4 helical membrane passes run 1-21 (MSEL…AWKA), 26-46 (WWFA…ITLY), 77-97 (ILPG…LGWV), and 108-128 (FGYS…SPAF).

The protein belongs to the OpgB family.

The protein resides in the cell inner membrane. The catalysed reaction is a phosphatidylglycerol + a membrane-derived-oligosaccharide D-glucose = a 1,2-diacyl-sn-glycerol + a membrane-derived-oligosaccharide 6-(glycerophospho)-D-glucose.. It participates in glycan metabolism; osmoregulated periplasmic glucan (OPG) biosynthesis. In terms of biological role, transfers a phosphoglycerol residue from phosphatidylglycerol to the membrane-bound nascent glucan backbones. The polypeptide is Phosphoglycerol transferase I (Citrobacter koseri (strain ATCC BAA-895 / CDC 4225-83 / SGSC4696)).